Reading from the N-terminus, the 100-residue chain is UPF0213 protein YhbQ (100 aa).

In terms of domain architecture, GIY-YIG spans 2–77 (TPWFLYLIRT…KQLTKRQKER (76 aa)).

This sequence belongs to the UPF0213 family.

The sequence is that of UPF0213 protein YhbQ from Shigella dysenteriae serotype 1 (strain Sd197).